Here is an 876-residue protein sequence, read N- to C-terminus: Alanine--tRNA ligase (876 aa).

Zn(2+) is bound by residues His-565, His-569, Cys-667, and His-671.

This sequence belongs to the class-II aminoacyl-tRNA synthetase family. Zn(2+) serves as cofactor.

Its subcellular location is the cytoplasm. It carries out the reaction tRNA(Ala) + L-alanine + ATP = L-alanyl-tRNA(Ala) + AMP + diphosphate. Functionally, catalyzes the attachment of alanine to tRNA(Ala) in a two-step reaction: alanine is first activated by ATP to form Ala-AMP and then transferred to the acceptor end of tRNA(Ala). Also edits incorrectly charged Ser-tRNA(Ala) and Gly-tRNA(Ala) via its editing domain. In Staphylococcus aureus (strain bovine RF122 / ET3-1), this protein is Alanine--tRNA ligase.